Consider the following 674-residue polypeptide: tRNA wybutosine-synthesizing protein 4 (674 aa).

S-adenosyl-L-methionine is bound by residues Arg84, Gly109, Asp140, Asp184–Leu185, and Glu212.

This sequence belongs to the methyltransferase superfamily. LCMT family.

The enzyme catalyses 7-[(3S)-3-amino-3-carboxypropyl]wyosine(37) in tRNA(Phe) + S-adenosyl-L-methionine = 7-[(3S)-(3-amino-3-methoxycarbonyl)propyl]wyosine(37) in tRNA(Phe) + S-adenosyl-L-homocysteine. It carries out the reaction 7-[(3S)-(3-amino-3-methoxycarbonyl)propyl]wyosine(37) in tRNA(Phe) + S-adenosyl-L-methionine + CO2 = wybutosine(37) in tRNA(Phe) + S-adenosyl-L-homocysteine + 2 H(+). It participates in tRNA modification; wybutosine-tRNA(Phe) biosynthesis. Functionally, probable S-adenosyl-L-methionine-dependent methyltransferase that acts as a component of the wybutosine biosynthesis pathway. Wybutosine is a hyper modified guanosine with a tricyclic base found at the 3'-position adjacent to the anticodon of eukaryotic phenylalanine tRNA. May methylate the carboxyl group of leucine residues to form alpha-leucine ester residues. In Candida glabrata (strain ATCC 2001 / BCRC 20586 / JCM 3761 / NBRC 0622 / NRRL Y-65 / CBS 138) (Yeast), this protein is tRNA wybutosine-synthesizing protein 4 (PPM2).